Reading from the N-terminus, the 368-residue chain is NAD(P)H-quinone oxidoreductase subunit 1, chloroplastic (368 aa).

6 helical membrane-spanning segments follow: residues 27–47 (FIWI…GVLV), 97–117 (WLFN…YLVI), 130–150 (IGVF…LMAG), 269–289 (SSLF…PFLL), 308–328 (IIIG…IAIM), and 348–368 (FLLP…AFLL).

The protein belongs to the complex I subunit 1 family. In terms of assembly, NDH is composed of at least 16 different subunits, 5 of which are encoded in the nucleus.

It is found in the plastid. The protein localises to the chloroplast thylakoid membrane. The catalysed reaction is a plastoquinone + NADH + (n+1) H(+)(in) = a plastoquinol + NAD(+) + n H(+)(out). The enzyme catalyses a plastoquinone + NADPH + (n+1) H(+)(in) = a plastoquinol + NADP(+) + n H(+)(out). In terms of biological role, NDH shuttles electrons from NAD(P)H:plastoquinone, via FMN and iron-sulfur (Fe-S) centers, to quinones in the photosynthetic chain and possibly in a chloroplast respiratory chain. The immediate electron acceptor for the enzyme in this species is believed to be plastoquinone. Couples the redox reaction to proton translocation, and thus conserves the redox energy in a proton gradient. This Physcomitrium patens (Spreading-leaved earth moss) protein is NAD(P)H-quinone oxidoreductase subunit 1, chloroplastic.